An 89-amino-acid polypeptide reads, in one-letter code: Cell division topological specificity factor (89 aa).

Belongs to the MinE family.

Its function is as follows. Prevents the cell division inhibition by proteins MinC and MinD at internal division sites while permitting inhibition at polar sites. This ensures cell division at the proper site by restricting the formation of a division septum at the midpoint of the long axis of the cell. This Sodalis glossinidius (strain morsitans) protein is Cell division topological specificity factor.